The sequence spans 23 residues: Basic phospholipase A2 homolog Vur-S49 analog (23 aa).

The disordered stretch occupies residues 1 to 23 (SVLEIGLMLQEETEKNPKTSYSI).

Post-translationally, contains 7 disulfide bonds. Expressed by the venom gland.

It localises to the secreted. The protein is Basic phospholipase A2 homolog Vur-S49 analog of Vipera renardi (Steppe viper).